The chain runs to 775 residues: Cation channel sperm-associated protein subunit epsilon-like protein (775 aa).

The N-terminal stretch at 1–20 (MLARRVVAALLLWLSCCVSA) is a signal peptide. Asn62 and Asn114 each carry an N-linked (GlcNAc...) asparagine glycan.

This sequence belongs to the CATSPERD family.

In Mus musculus (Mouse), this protein is Cation channel sperm-associated protein subunit epsilon-like protein.